The primary structure comprises 844 residues: MRLSELHTGDQAVIVRVEGRGVFRKRILEMGFVHGKTITVVQCAPLRDPVYYRIMDYNVSLRREDAAKIEVELISSNATSSPASNDIGEQSANPDSNESIPTNPTEDISAKTKSEIEIEVKPNGHVIRVALIGNPNCGKTSIFNRASGAHEHVGNYSGVTVEAKEGLFRHGDYKIEIIDLPGTYSLSPYSPEELYIRQYLSEETRPDLVLNVVDTCNLERNLYLTLQLKEMGLPVVIALNMFDEFEKKGDTFDYPALSAMLGIPMVPTVGRTGQGLPELFDTLISIHEGRNKIIRPIRINYGSIIEPAVEALTEKINNQLSLPYSLPARYIAVKLLEGDKEMNRFVGEQPKGLFILSARDFALREIDEHLTVARDAESIITDQRYGFIAGALKETYRSSYKQLKTLTDKIDHIVTHRVLGFPLFLLFMFIMFEATFVLGRYPMDWIEAGVGWIGSMVNTFMPDGSFKDLIVDGVIGGVGGVIVFLPNILILYFFISLMEDSGYMARAAFIMDKIMHRMGLHGKSFIPLIMGFGCNVPAIMATRTIESKQSRMITMLVTPLMSCSARLPVYLLLAGAFFPDSAGLVLFGLYFLGILLAVLLARLFKKTLFKVEDVPFVMELPPYRMPTSRSVIVHMWNKAAQYLRKMGSIILLASIVIWFLSYYPRYSEEAVLISQIEQIEGNPQLDEEKKTSQIEELNRKAHIEQQEQSYIGRFGKAVQPVLAPIGFDWKMSVSLLTGMAAKEVVVSTLGVIYTGDSDDSDEAARRLGERIREDRDAEGNHTFSPIIALALMAFVLIYFPCIATVVAIGRESGHWKWAVFSIIYSCSLAWIVSFLIYRIGILFF.

A feoA region spans residues 1–73 (MRLSELHTGD…EDAAKIEVEL (73 aa)). Residues 74–844 (ISSNATSSPA…LIYRIGILFF (771 aa)) form a feoB region. Residues 79–106 (TSSPASNDIGEQSANPDSNESIPTNPTE) show a composition bias toward polar residues. Positions 79 to 110 (TSSPASNDIGEQSANPDSNESIPTNPTEDISA) are disordered. One can recognise a FeoB-type G domain in the interval 126 to 289 (VIRVALIGNP…FDTLISIHEG (164 aa)). GTP is bound by residues 133 to 140 (GNPNCGKT), 158 to 162 (GVTVE), 179 to 182 (DLPG), 240 to 243 (NMFD), and 269 to 271 (VGR). The next 8 helical transmembrane spans lie at 418 to 438 (VLGF…TFVL), 475 to 495 (IGGV…YFFI), 520 to 540 (LHGK…PAIM), 559 to 579 (PLMS…AFFP), 581 to 601 (SAGL…VLLA), 646 to 666 (MGSI…YPRY), 786 to 806 (IIAL…ATVV), and 817 to 837 (WAVF…FLIY).

This sequence in the N-terminal section; belongs to the FeoA family. It in the C-terminal section; belongs to the TRAFAC class TrmE-Era-EngA-EngB-Septin-like GTPase superfamily. FeoB GTPase (TC 9.A.8) family.

It is found in the cell inner membrane. Functionally, probable transporter of a GTP-driven Fe(2+) uptake system. The protein is Fe(2+) transport protein A/Fe(2+) transporter FeoB fusion protein of Porphyromonas gingivalis (strain ATCC BAA-308 / W83).